A 95-amino-acid polypeptide reads, in one-letter code: Small ribosomal subunit protein bS6 (95 aa).

The protein belongs to the bacterial ribosomal protein bS6 family.

Functionally, binds together with bS18 to 16S ribosomal RNA. The chain is Small ribosomal subunit protein bS6 from Bacillus licheniformis (strain ATCC 14580 / DSM 13 / JCM 2505 / CCUG 7422 / NBRC 12200 / NCIMB 9375 / NCTC 10341 / NRRL NRS-1264 / Gibson 46).